A 294-amino-acid polypeptide reads, in one-letter code: 4-hydroxy-tetrahydrodipicolinate synthase (294 aa).

Threonine 49 is a pyruvate binding site. The Proton donor/acceptor role is filled by tyrosine 136. The active-site Schiff-base intermediate with substrate is the lysine 164. A pyruvate-binding site is contributed by isoleucine 207.

Belongs to the DapA family. Homotetramer; dimer of dimers.

Its subcellular location is the cytoplasm. It catalyses the reaction L-aspartate 4-semialdehyde + pyruvate = (2S,4S)-4-hydroxy-2,3,4,5-tetrahydrodipicolinate + H2O + H(+). The protein operates within amino-acid biosynthesis; L-lysine biosynthesis via DAP pathway; (S)-tetrahydrodipicolinate from L-aspartate: step 3/4. Functionally, catalyzes the condensation of (S)-aspartate-beta-semialdehyde [(S)-ASA] and pyruvate to 4-hydroxy-tetrahydrodipicolinate (HTPA). This chain is 4-hydroxy-tetrahydrodipicolinate synthase, found in Natronomonas pharaonis (strain ATCC 35678 / DSM 2160 / CIP 103997 / JCM 8858 / NBRC 14720 / NCIMB 2260 / Gabara) (Halobacterium pharaonis).